Reading from the N-terminus, the 442-residue chain is 3-ketoacyl-CoA thiolase (442 aa).

The active-site Acyl-thioester intermediate is Cys105. Residues His398 and Cys428 each act as proton acceptor in the active site.

This sequence belongs to the thiolase-like superfamily. Thiolase family. Heterotetramer of two alpha chains (FadJ) and two beta chains (FadI).

Its subcellular location is the cytoplasm. The catalysed reaction is an acyl-CoA + acetyl-CoA = a 3-oxoacyl-CoA + CoA. Its pathway is lipid metabolism; fatty acid beta-oxidation. Catalyzes the final step of fatty acid oxidation in which acetyl-CoA is released and the CoA ester of a fatty acid two carbons shorter is formed. The polypeptide is 3-ketoacyl-CoA thiolase (Aliivibrio fischeri (strain MJ11) (Vibrio fischeri)).